We begin with the raw amino-acid sequence, 522 residues long: Peptide methionine sulfoxide reductase MsrA/MsrB (522 aa).

A Thioredoxin domain is found at 17 to 174 (LALGACSPKI…ALALIRDPNA (158 aa)). Cys68 and Cys71 are joined by a disulfide. A peptide methionine sulfoxide reductase A region spans residues 199–354 (RTIYLAGGCF…PNGYCHIDIR (156 aa)). The active site involves Cys207. In terms of domain architecture, MsrB spans 383–506 (DAELKRTLTE…NGASLKFIPL (124 aa)). Residues Cys440 and Cys495 are joined by a disulfide bond. The active-site Nucleophile is the Cys495.

It in the N-terminal section; belongs to the thioredoxin family. In the central section; belongs to the MsrA Met sulfoxide reductase family. The protein in the C-terminal section; belongs to the MsrB Met sulfoxide reductase family.

It carries out the reaction L-methionyl-[protein] + [thioredoxin]-disulfide + H2O = L-methionyl-(S)-S-oxide-[protein] + [thioredoxin]-dithiol. The catalysed reaction is [thioredoxin]-disulfide + L-methionine + H2O = L-methionine (S)-S-oxide + [thioredoxin]-dithiol. It catalyses the reaction L-methionyl-[protein] + [thioredoxin]-disulfide + H2O = L-methionyl-(R)-S-oxide-[protein] + [thioredoxin]-dithiol. Its function is as follows. Has an important function as a repair enzyme for proteins that have been inactivated by oxidation. Catalyzes the reversible oxidation-reduction of methionine sulfoxide in proteins to methionine. This is Peptide methionine sulfoxide reductase MsrA/MsrB (msrAB) from Neisseria meningitidis serogroup A / serotype 4A (strain DSM 15465 / Z2491).